Here is a 490-residue protein sequence, read N- to C-terminus: Aspartyl/glutamyl-tRNA(Asn/Gln) amidotransferase subunit B (490 aa).

The protein belongs to the GatB/GatE family. GatB subfamily. As to quaternary structure, heterotrimer of A, B and C subunits.

It carries out the reaction L-glutamyl-tRNA(Gln) + L-glutamine + ATP + H2O = L-glutaminyl-tRNA(Gln) + L-glutamate + ADP + phosphate + H(+). The catalysed reaction is L-aspartyl-tRNA(Asn) + L-glutamine + ATP + H2O = L-asparaginyl-tRNA(Asn) + L-glutamate + ADP + phosphate + 2 H(+). Functionally, allows the formation of correctly charged Asn-tRNA(Asn) or Gln-tRNA(Gln) through the transamidation of misacylated Asp-tRNA(Asn) or Glu-tRNA(Gln) in organisms which lack either or both of asparaginyl-tRNA or glutaminyl-tRNA synthetases. The reaction takes place in the presence of glutamine and ATP through an activated phospho-Asp-tRNA(Asn) or phospho-Glu-tRNA(Gln). This Burkholderia pseudomallei (strain 1106a) protein is Aspartyl/glutamyl-tRNA(Asn/Gln) amidotransferase subunit B.